An 842-amino-acid polypeptide reads, in one-letter code: Protein translocase subunit SecA (842 aa).

ATP is bound by residues Q85, 103–107 (GEGKT), and D493. Positions 825, 827, 836, and 837 each coordinate Zn(2+).

Belongs to the SecA family. In terms of assembly, monomer and homodimer. Part of the essential Sec protein translocation apparatus which comprises SecA, SecYEG and auxiliary proteins SecDF. Other proteins may also be involved. Zn(2+) is required as a cofactor.

It is found in the cell membrane. It localises to the cytoplasm. It catalyses the reaction ATP + H2O + cellular proteinSide 1 = ADP + phosphate + cellular proteinSide 2.. Part of the Sec protein translocase complex. Interacts with the SecYEG preprotein conducting channel. Has a central role in coupling the hydrolysis of ATP to the transfer of proteins into and across the cell membrane, serving as an ATP-driven molecular motor driving the stepwise translocation of polypeptide chains across the membrane. The polypeptide is Protein translocase subunit SecA (Streptococcus uberis (strain ATCC BAA-854 / 0140J)).